Reading from the N-terminus, the 146-residue chain is Large ribosomal subunit protein uL15 (146 aa).

The disordered stretch occupies residues 1–56 (MKLHELKAAEGANKASKRVGRGTGSGLGKTSGKGQNGQNSRSGGGVRPGFEGGQMP). 2 stretches are compositionally biased toward gly residues: residues 21-35 (RGTGSGLGKTSGKGQ) and 42-52 (SGGGVRPGFEG).

This sequence belongs to the universal ribosomal protein uL15 family. Part of the 50S ribosomal subunit.

In terms of biological role, binds to the 23S rRNA. This chain is Large ribosomal subunit protein uL15, found in Clostridium botulinum (strain Langeland / NCTC 10281 / Type F).